A 182-amino-acid chain; its full sequence is Large ribosomal subunit protein uL10 (182 aa).

The protein belongs to the universal ribosomal protein uL10 family. In terms of assembly, part of the ribosomal stalk of the 50S ribosomal subunit. The N-terminus interacts with L11 and the large rRNA to form the base of the stalk. The C-terminus forms an elongated spine to which L12 dimers bind in a sequential fashion forming a multimeric L10(L12)X complex.

Its function is as follows. Forms part of the ribosomal stalk, playing a central role in the interaction of the ribosome with GTP-bound translation factors. In Gluconacetobacter diazotrophicus (strain ATCC 49037 / DSM 5601 / CCUG 37298 / CIP 103539 / LMG 7603 / PAl5), this protein is Large ribosomal subunit protein uL10.